A 185-amino-acid chain; its full sequence is ATP-dependent protease subunit HslV (185 aa).

Threonine 12 is a catalytic residue. Na(+) is bound by residues alanine 168, cysteine 171, and threonine 174.

The protein belongs to the peptidase T1B family. HslV subfamily. A double ring-shaped homohexamer of HslV is capped on each side by a ring-shaped HslU homohexamer. The assembly of the HslU/HslV complex is dependent on binding of ATP.

It localises to the cytoplasm. The enzyme catalyses ATP-dependent cleavage of peptide bonds with broad specificity.. Its activity is regulated as follows. Allosterically activated by HslU binding. In terms of biological role, protease subunit of a proteasome-like degradation complex believed to be a general protein degrading machinery. This Roseobacter denitrificans (strain ATCC 33942 / OCh 114) (Erythrobacter sp. (strain OCh 114)) protein is ATP-dependent protease subunit HslV.